Consider the following 459-residue polypeptide: Bifunctional protein GlmU (459 aa).

Positions 1–229 are pyrophosphorylase; that stretch reads MTNYAIILAA…FDESLGVNDR (229 aa). Residues 8–11, K22, Q72, and 77–78 each bind UDP-N-acetyl-alpha-D-glucosamine; these read LAAG and GT. D102 serves as a coordination point for Mg(2+). Residues G139, E154, N169, and N227 each coordinate UDP-N-acetyl-alpha-D-glucosamine. Position 227 (N227) interacts with Mg(2+). Residues 230–250 form a linker region; it reads VALATAESVMRRRINQQHMVN. The N-acetyltransferase stretch occupies residues 251-459; that stretch reads GVSFVNPHAT…KRLPHHPQNK (209 aa). UDP-N-acetyl-alpha-D-glucosamine-binding residues include R332 and K350. H362 (proton acceptor) is an active-site residue. UDP-N-acetyl-alpha-D-glucosamine is bound by residues Y365 and N376. Acetyl-CoA-binding positions include A379, 385–386, S404, A422, and R439; that span reads NY.

This sequence in the N-terminal section; belongs to the N-acetylglucosamine-1-phosphate uridyltransferase family. It in the C-terminal section; belongs to the transferase hexapeptide repeat family. In terms of assembly, homotrimer. It depends on Mg(2+) as a cofactor.

It localises to the cytoplasm. It carries out the reaction alpha-D-glucosamine 1-phosphate + acetyl-CoA = N-acetyl-alpha-D-glucosamine 1-phosphate + CoA + H(+). The catalysed reaction is N-acetyl-alpha-D-glucosamine 1-phosphate + UTP + H(+) = UDP-N-acetyl-alpha-D-glucosamine + diphosphate. The protein operates within nucleotide-sugar biosynthesis; UDP-N-acetyl-alpha-D-glucosamine biosynthesis; N-acetyl-alpha-D-glucosamine 1-phosphate from alpha-D-glucosamine 6-phosphate (route II): step 2/2. Its pathway is nucleotide-sugar biosynthesis; UDP-N-acetyl-alpha-D-glucosamine biosynthesis; UDP-N-acetyl-alpha-D-glucosamine from N-acetyl-alpha-D-glucosamine 1-phosphate: step 1/1. It participates in bacterial outer membrane biogenesis; LPS lipid A biosynthesis. In terms of biological role, catalyzes the last two sequential reactions in the de novo biosynthetic pathway for UDP-N-acetylglucosamine (UDP-GlcNAc). The C-terminal domain catalyzes the transfer of acetyl group from acetyl coenzyme A to glucosamine-1-phosphate (GlcN-1-P) to produce N-acetylglucosamine-1-phosphate (GlcNAc-1-P), which is converted into UDP-GlcNAc by the transfer of uridine 5-monophosphate (from uridine 5-triphosphate), a reaction catalyzed by the N-terminal domain. In Streptococcus sanguinis (strain SK36), this protein is Bifunctional protein GlmU.